A 357-amino-acid polypeptide reads, in one-letter code: UDP-N-acetylglucosamine--N-acetylmuramyl-(pentapeptide) pyrophosphoryl-undecaprenol N-acetylglucosamine transferase (357 aa).

UDP-N-acetyl-alpha-D-glucosamine contacts are provided by residues threonine 12–glycine 14, asparagine 124, arginine 163, serine 189, isoleucine 243, alanine 262–glutamate 267, and glutamine 288.

The protein belongs to the glycosyltransferase 28 family. MurG subfamily.

The protein resides in the cell inner membrane. The enzyme catalyses di-trans,octa-cis-undecaprenyl diphospho-N-acetyl-alpha-D-muramoyl-L-alanyl-D-glutamyl-meso-2,6-diaminopimeloyl-D-alanyl-D-alanine + UDP-N-acetyl-alpha-D-glucosamine = di-trans,octa-cis-undecaprenyl diphospho-[N-acetyl-alpha-D-glucosaminyl-(1-&gt;4)]-N-acetyl-alpha-D-muramoyl-L-alanyl-D-glutamyl-meso-2,6-diaminopimeloyl-D-alanyl-D-alanine + UDP + H(+). It functions in the pathway cell wall biogenesis; peptidoglycan biosynthesis. Cell wall formation. Catalyzes the transfer of a GlcNAc subunit on undecaprenyl-pyrophosphoryl-MurNAc-pentapeptide (lipid intermediate I) to form undecaprenyl-pyrophosphoryl-MurNAc-(pentapeptide)GlcNAc (lipid intermediate II). In Pseudomonas paraeruginosa (strain DSM 24068 / PA7) (Pseudomonas aeruginosa (strain PA7)), this protein is UDP-N-acetylglucosamine--N-acetylmuramyl-(pentapeptide) pyrophosphoryl-undecaprenol N-acetylglucosamine transferase.